Consider the following 132-residue polypeptide: EF-hand calcium-binding domain-containing protein 10 (132 aa).

EF-hand domains lie at 64–99 and 120–132; these read MDNSNTVSMFEMMDMAGRGCISFVQYKEALKNLGLC and EMNKRMEKMWSMF.

In Mus musculus (Mouse), this protein is EF-hand calcium-binding domain-containing protein 10 (Efcab10).